We begin with the raw amino-acid sequence, 1505 residues long: Probable serine/threonine-protein kinase irlD (1505 aa).

The span at 1-18 (MGPKKGKRSHSKNHHHHN) shows a compositional bias: basic residues. 4 disordered regions span residues 1–30 (MGPK…NSGG), 121–211 (IPQP…NNIL), 548–571 (TTTT…DKEN), and 862–1013 (EENE…TIAT). The span at 139-158 (SISTTTTTTTATAIEIESSS) shows a compositional bias: low complexity. Over residues 159 to 172 (GLTSNITDSTEIQL) the composition is skewed to polar residues. 2 stretches are compositionally biased toward low complexity: residues 173–209 (DSTT…NSNN) and 548–561 (TTTT…TTTT). 2 stretches are compositionally biased toward basic and acidic residues: residues 562–571 (IDKDEKDKEN) and 862–882 (EENE…EKKK). A coiled-coil region spans residues 846–892 (IRTEESLKAEKDLLEQEENEKKRLKEKRKKEEKEKKKQQNLKQKSLI). Over residues 896–924 (TTTTTTTTPIPITVPIPTQTQTPTQTPTQ) the composition is skewed to low complexity. Positions 925 to 943 (TPIPTPIPTTPIPTTPIPI) are enriched in pro residues. Composition is skewed to low complexity over residues 944 to 954 (PIQLTPTTPKT) and 960 to 977 (TPKT…KTPK). The span at 978–989 (NSTLDKQTISTP) shows a compositional bias: polar residues. A Protein kinase domain is found at 1054–1324 (RKDEFIIGRG…TENILLHPFF (271 aa)). ATP-binding positions include 1060-1068 (IGRGSNGTL) and Lys1083. The Proton acceptor role is filled by Asp1194. The 179-residue stretch at 1327 to 1505 (HEKKVKFIDA…LIYFNDLIIK (179 aa)) folds into the KEN domain.

The protein belongs to the protein kinase superfamily. Ser/Thr protein kinase family.

It catalyses the reaction L-seryl-[protein] + ATP = O-phospho-L-seryl-[protein] + ADP + H(+). The enzyme catalyses L-threonyl-[protein] + ATP = O-phospho-L-threonyl-[protein] + ADP + H(+). This is Probable serine/threonine-protein kinase irlD (irlD) from Dictyostelium discoideum (Social amoeba).